Reading from the N-terminus, the 279-residue chain is H-2 class II histocompatibility antigen gamma chain (279 aa).

The disordered stretch occupies residues 1-23 (MDDQRDLISNHEQLPILGNRPRE). The Cytoplasmic portion of the chain corresponds to 1 to 29 (MDDQRDLISNHEQLPILGNRPREPERCSR). Ser-9 bears the Phosphoserine mark. The chain crosses the membrane as a helical; Signal-anchor for type II membrane protein span at residues 30 to 55 (GALYTGVSVLVALLLAGQATTAYFLY). Residues 56–279 (QQQGRLDKLT…TRQELGQVTL (224 aa)) are Extracellular-facing. Asn-113 and Asn-119 each carry an N-linked (GlcNAc...) asparagine glycan. The 62-residue stretch at 193–254 (LTKCQEEVSH…HTKSRGRHNC (62 aa)) folds into the Thyroglobulin type-1 domain. Cystine bridges form between Cys-196/Cys-215, Cys-226/Cys-233, and Cys-235/Cys-254. A glycan (O-linked (Xyl...) (chondroitin sulfate) serine) is linked at Ser-265.

In terms of assembly, nonamer composed of three alpha/beta/gamma heterotrimers. Interacts with CD44; this complex is essential for the MIF-induced signaling cascade that results in B cell survival. As to quaternary structure, interacts with the mature form of CTSL; the complex survive in neutral pH environment. Expressed in thymus and lymph noodes. Expressed by antigen-presenting cells (APCs). In terms of tissue distribution, expressed in thymus and lymph noodes.

It localises to the late endosome. It is found in the lysosome. Its subcellular location is the cell membrane. The protein localises to the endoplasmic reticulum membrane. The protein resides in the golgi apparatus. It localises to the trans-Golgi network. It is found in the endosome. Its subcellular location is the secreted. Plays a critical role in MHC class II antigen processing by stabilizing peptide-free class II alpha/beta heterodimers in a complex soon after their synthesis and directing transport of the complex from the endoplasmic reticulum to compartments where peptide loading of class II takes place. Enhance also the stimulation of T-cell responses through interaction with CD44. In terms of biological role, stabilizes the conformation of mature CTSL by binding to its active site and serving as a chaperone to help maintain a pool of mature enzyme in endocytic compartments and extracellular space of antigen-presenting cells (APCs). Its function is as follows. Binds to the peptide-binding site of MHC class II alpha/beta heterodimers forming an alpha-beta-CLIP complex, thereby preventing the loading of antigenic peptides to the MHC class II complex until its release by HLA-DM in the endosome. The chain is H-2 class II histocompatibility antigen gamma chain from Mus musculus (Mouse).